The sequence spans 693 residues: MKIFREVFELGNKEIILETGGMARQADGSVTVSCGNNVVLVTTVVKKSVADGTDFFPLSVHYLEKTYAAGKIPGGFLRREGRPSEEQILISRLIDRSIRPSFPDGFFNEIQIVATVLSYDGAFSPDILALIGASASLAISGAPYDDVVAGVRVGYTNGKYILNPNKQDLRDSDLDLVVSGTYDAILMVESEANSLPESVMLGGILYAHKHLKTIINSINRLAKVASKPRIEYSIYQINKFLKSQIKSQFFGEIKNTYTIALKQERNLKLNAIRKNVLEYIFSSDVDGNEYTEKEILEAFHDIEKDLVRSNILEGKPRIDGRCTETIRPINVKIGVLPGVHGSALFTRGETQALVVTTLGSDRDAQLVESLDGIEKCRYMLHYNFPPYSVGECGMVGMAPKRREIGHANLAKRATQAVFPNEEAYPYVVRVVSEILESNGSSSMATVCGSSLSMMDAGVPIAEPVAGIAMGLIKDGAKYAVLSDILGDEDHLGDMDFKVAGTRYGVTALQMDIKIKGISREILEQALEQARVGRLHILGIMNEVIKEHKEAVSDVAPQIHVMNINPAKIKDVVGRGGATVKGIVEKTGAQIDTSDSGEVKVFAKDKKSMDMAVAMIEEIVAEVEEGQVYKGKIVKLLDSGVFVNLLGSQDGYLPFSEIEQAGMKTNSLVEGQGLEVLVQNIDRGGRVKLSLVAR.

The Mg(2+) site is built by Asp-489 and Asp-495. A KH domain is found at 556 to 615 (PQIHVMNINPAKIKDVVGRGGATVKGIVEKTGAQIDTSDSGEVKVFAKDKKSMDMAVAMI). The 69-residue stretch at 625–693 (GQVYKGKIVK…GRVKLSLVAR (69 aa)) folds into the S1 motif domain.

Belongs to the polyribonucleotide nucleotidyltransferase family. Component of the RNA degradosome, which is a multiprotein complex involved in RNA processing and mRNA degradation. The cofactor is Mg(2+).

It is found in the cytoplasm. The enzyme catalyses RNA(n+1) + phosphate = RNA(n) + a ribonucleoside 5'-diphosphate. Involved in mRNA degradation. Catalyzes the phosphorolysis of single-stranded polyribonucleotides processively in the 3'- to 5'-direction. The polypeptide is Polyribonucleotide nucleotidyltransferase (Francisella tularensis subsp. holarctica (strain OSU18)).